The chain runs to 384 residues: MSRELQDVDLAEVKPLVEKGETITGLLQEFDVQEQDIETLHGSIHVTLCGTPKGNRPVILTYHDIGMNHKTCYNPLFNSEDMQEITQHFAVCHVDAPGQQDGAASFPTGYMYPSMDQLAEMLPGVLQQFGLKSIIGMGTGAGAYILTRFALNNPEMVEGLVLINVNPCAEGWMDWAASKISGWTQALPDMVVSHLFGKEEMQNNVEVVHAYRHHVMNDMNPGNLQLFINAYNGRRDLEIERPMPGAHTVTLQCPALLVVGDSSPAVDAVVECNSKLDPTKTTLLKMADCGGLPQISQPAKLAEAFKYFVQGMGYMPSASMTRLMRSRTASGSSVTSLEGARSRSHTSEGTRSRSHTSEGTRLDIIPNSGGPGSSAGPNSTEVSC.

The residue at position 2 (Ser-2) is an N-acetylserine. Ser-2, Ser-319, and Ser-326 each carry phosphoserine. The segment at 325 to 384 (RSRTASGSSVTSLEGARSRSHTSEGTRSRSHTSEGTRLDIIPNSGGPGSSAGPNSTEVSC) is disordered. The span at 327-336 (RTASGSSVTS) shows a compositional bias: polar residues. Thr-328 is modified (phosphothreonine; by SGK1). Phosphoserine; by SGK1 is present on residues Ser-330 and Ser-332. Ser-333 is subject to Phosphoserine. Thr-335 is modified (phosphothreonine). 2 positions are modified to phosphoserine: Ser-336 and Ser-342. 2 consecutive repeat copies span residues 339-348 (GARSRSHTSE) and 349-358 (GTRSRSHTSE). A 2 X 10 AA tandem repeats of G-[PST]-R-S-R-S-H-T-S-E region spans residues 339 to 358 (GARSRSHTSEGTRSRSHTSE). A compositionally biased stretch (basic and acidic residues) spans 345–361 (HTSEGTRSRSHTSEGTR). A Phosphothreonine; by SGK1 modification is found at Thr-346. Ser-352 is subject to Phosphoserine. Residue Thr-356 is modified to Phosphothreonine; by SGK1. Positions 374–384 (SAGPNSTEVSC) are enriched in low complexity.

The protein belongs to the NDRG family. In terms of assembly, interacts with RAB4A (membrane-bound form); the interaction involves NDRG1 in vesicular recycling of CDH1. Interacts with APOA1, APOA2, PRA1 and RTN1. In terms of processing, under stress conditions, phosphorylated in the C-terminal on many serine and threonine residues. Phosphorylated in vitro by PKA. Phosphorylation enhanced by increased intracellular cAMP levels. Homocysteine induces dephosphorylation. Phosphorylation by SGK1 is cell cycle dependent.

The protein localises to the cytoplasm. Its subcellular location is the cytosol. It localises to the cytoskeleton. The protein resides in the microtubule organizing center. It is found in the centrosome. The protein localises to the nucleus. Its subcellular location is the cell membrane. Its function is as follows. Stress-responsive protein involved in hormone responses, cell growth, and differentiation. Acts as a tumor suppressor in many cell types. Necessary but not sufficient for p53/TP53-mediated caspase activation and apoptosis. Has a role in cell trafficking notably of the Schwann cell and is necessary for the maintenance and development of the peripheral nerve myelin sheath. Required for vesicular recycling of CDH1 and TF. May also function in lipid trafficking. Protects cells from spindle disruption damage. Functions in p53/TP53-dependent mitotic spindle checkpoint. Regulates microtubule dynamics and maintains euploidy. The polypeptide is Protein NDRG1 (NDRG1) (Bos taurus (Bovine)).